We begin with the raw amino-acid sequence, 526 residues long: GMP synthase [glutamine-hydrolyzing] (526 aa).

The 201-residue stretch at 4–204 folds into the Glutamine amidotransferase type-1 domain; it reads KIVVLDFGSQ…AHAICGCSGD (201 aa). The Nucleophile role is filled by Cys87. Catalysis depends on residues His178 and Glu180. The 197-residue stretch at 205-401 folds into the GMPS ATP-PPase domain; sequence WTPASFVEEQ…LDVPDPIVGR (197 aa). 232–238 contacts ATP; sequence SGGVDSS.

As to quaternary structure, homodimer.

The catalysed reaction is XMP + L-glutamine + ATP + H2O = GMP + L-glutamate + AMP + diphosphate + 2 H(+). It functions in the pathway purine metabolism; GMP biosynthesis; GMP from XMP (L-Gln route): step 1/1. In terms of biological role, catalyzes the synthesis of GMP from XMP. This Salinibacter ruber (strain DSM 13855 / M31) protein is GMP synthase [glutamine-hydrolyzing].